The following is a 157-amino-acid chain: SsrA-binding protein (157 aa).

The interval 133 to 157 is disordered; that stretch reads LHDKRETEKKRDWSREKSRLLRARG. Over residues 135 to 151 the composition is skewed to basic and acidic residues; that stretch reads DKRETEKKRDWSREKSR.

The protein belongs to the SmpB family.

The protein localises to the cytoplasm. Required for rescue of stalled ribosomes mediated by trans-translation. Binds to transfer-messenger RNA (tmRNA), required for stable association of tmRNA with ribosomes. tmRNA and SmpB together mimic tRNA shape, replacing the anticodon stem-loop with SmpB. tmRNA is encoded by the ssrA gene; the 2 termini fold to resemble tRNA(Ala) and it encodes a 'tag peptide', a short internal open reading frame. During trans-translation Ala-aminoacylated tmRNA acts like a tRNA, entering the A-site of stalled ribosomes, displacing the stalled mRNA. The ribosome then switches to translate the ORF on the tmRNA; the nascent peptide is terminated with the 'tag peptide' encoded by the tmRNA and targeted for degradation. The ribosome is freed to recommence translation, which seems to be the essential function of trans-translation. This is SsrA-binding protein from Afipia carboxidovorans (strain ATCC 49405 / DSM 1227 / KCTC 32145 / OM5) (Oligotropha carboxidovorans).